The following is a 491-amino-acid chain: Ketol-acid reductoisomerase (NADP(+)) (491 aa).

Residues 15–208 form the KARI N-terminal Rossmann domain; sequence AQLGKCRFMG…GGHRAGVLES (194 aa). NADP(+)-binding positions include 45–48, Arg68, Arg76, Ser78, and 108–110; these read CGAQ and DKQ. The active site involves His132. Gly158 serves as a coordination point for NADP(+). 2 consecutive KARI C-terminal knotted domains span residues 209 to 344 and 345 to 484; these read SFVA…TAPQ and YEGK…MTDM. Asp217, Glu221, Glu389, and Glu393 together coordinate Mg(2+). Ser414 contacts substrate.

The protein belongs to the ketol-acid reductoisomerase family. Requires Mg(2+) as cofactor.

It carries out the reaction (2R)-2,3-dihydroxy-3-methylbutanoate + NADP(+) = (2S)-2-acetolactate + NADPH + H(+). The catalysed reaction is (2R,3R)-2,3-dihydroxy-3-methylpentanoate + NADP(+) = (S)-2-ethyl-2-hydroxy-3-oxobutanoate + NADPH + H(+). It participates in amino-acid biosynthesis; L-isoleucine biosynthesis; L-isoleucine from 2-oxobutanoate: step 2/4. It functions in the pathway amino-acid biosynthesis; L-valine biosynthesis; L-valine from pyruvate: step 2/4. Its function is as follows. Involved in the biosynthesis of branched-chain amino acids (BCAA). Catalyzes an alkyl-migration followed by a ketol-acid reduction of (S)-2-acetolactate (S2AL) to yield (R)-2,3-dihydroxy-isovalerate. In the isomerase reaction, S2AL is rearranged via a Mg-dependent methyl migration to produce 3-hydroxy-3-methyl-2-ketobutyrate (HMKB). In the reductase reaction, this 2-ketoacid undergoes a metal-dependent reduction by NADPH to yield (R)-2,3-dihydroxy-isovalerate. This Escherichia coli O8 (strain IAI1) protein is Ketol-acid reductoisomerase (NADP(+)).